Here is a 259-residue protein sequence, read N- to C-terminus: Small ribosomal subunit protein eS1 (259 aa).

A compositionally biased stretch (basic residues) spans 1 to 18 (MAVGKNKRISKGKKGGKK). The tract at residues 1-22 (MAVGKNKRISKGKKGGKKKASD) is disordered.

Belongs to the eukaryotic ribosomal protein eS1 family. Component of the small ribosomal subunit. Mature ribosomes consist of a small (40S) and a large (60S) subunit. The 40S subunit contains about 33 different proteins and 1 molecule of RNA (18S). The 60S subunit contains about 49 different proteins and 3 molecules of RNA (25S, 5.8S and 5S).

Its subcellular location is the cytoplasm. In Chlamydomonas reinhardtii (Chlamydomonas smithii), this protein is Small ribosomal subunit protein eS1.